Consider the following 204-residue polypeptide: Thiamine-phosphate synthase (204 aa).

Residues 37–41 (QVREK) and asparagine 69 contribute to the 4-amino-2-methyl-5-(diphosphooxymethyl)pyrimidine site. Mg(2+) is bound by residues aspartate 70 and aspartate 89. Residue serine 108 coordinates 4-amino-2-methyl-5-(diphosphooxymethyl)pyrimidine. 134–136 (TGT) is a binding site for 2-[(2R,5Z)-2-carboxy-4-methylthiazol-5(2H)-ylidene]ethyl phosphate. Lysine 137 is a binding site for 4-amino-2-methyl-5-(diphosphooxymethyl)pyrimidine. 2-[(2R,5Z)-2-carboxy-4-methylthiazol-5(2H)-ylidene]ethyl phosphate is bound by residues glycine 165 and 185–186 (IS).

It belongs to the thiamine-phosphate synthase family. The cofactor is Mg(2+).

It catalyses the reaction 2-[(2R,5Z)-2-carboxy-4-methylthiazol-5(2H)-ylidene]ethyl phosphate + 4-amino-2-methyl-5-(diphosphooxymethyl)pyrimidine + 2 H(+) = thiamine phosphate + CO2 + diphosphate. The enzyme catalyses 2-(2-carboxy-4-methylthiazol-5-yl)ethyl phosphate + 4-amino-2-methyl-5-(diphosphooxymethyl)pyrimidine + 2 H(+) = thiamine phosphate + CO2 + diphosphate. The catalysed reaction is 4-methyl-5-(2-phosphooxyethyl)-thiazole + 4-amino-2-methyl-5-(diphosphooxymethyl)pyrimidine + H(+) = thiamine phosphate + diphosphate. It participates in cofactor biosynthesis; thiamine diphosphate biosynthesis; thiamine phosphate from 4-amino-2-methyl-5-diphosphomethylpyrimidine and 4-methyl-5-(2-phosphoethyl)-thiazole: step 1/1. Condenses 4-methyl-5-(beta-hydroxyethyl)thiazole monophosphate (THZ-P) and 2-methyl-4-amino-5-hydroxymethyl pyrimidine pyrophosphate (HMP-PP) to form thiamine monophosphate (TMP). The chain is Thiamine-phosphate synthase from Clostridium novyi (strain NT).